The following is a 244-amino-acid chain: uncharacterized protein (244 aa).

One can recognise an FCP1 homology domain in the interval 19–196 (ATDNRKLVIL…ACVIRYLKHL (178 aa)).

This is an uncharacterized protein from Schizosaccharomyces pombe (strain 972 / ATCC 24843) (Fission yeast).